A 1940-amino-acid chain; its full sequence is Myosin-3 (1940 aa).

The 50-residue stretch at D33–P82 folds into the Myosin N-terminal SH3-like domain. Positions D86–D779 constitute a Myosin motor domain. K130 bears the N6,N6,N6-trimethyllysine mark. G179–T186 provides a ligand contact to ATP. 2 actin-binding regions span residues L656–E678 and K758–G772. In terms of domain architecture, IQ spans L782–S811. The stretch at L840 to M1933 forms a coiled coil. Residues A1260 to S1289 are disordered. Residues R1269–Q1282 are compositionally biased toward polar residues.

Belongs to the TRAFAC class myosin-kinesin ATPase superfamily. Myosin family. In terms of assembly, muscle myosin is a hexameric protein that consists of 2 heavy chain subunits (MHC), 2 alkali light chain subunits (MLC) and 2 regulatory light chain subunits (MLC-2).

It localises to the cytoplasm. The protein localises to the myofibril. Its function is as follows. Muscle contraction. The sequence is that of Myosin-3 (Myh3) from Rattus norvegicus (Rat).